Consider the following 272-residue polypeptide: tRNA pseudouridine synthase B (272 aa).

Asp38 functions as the Nucleophile in the catalytic mechanism.

The protein belongs to the pseudouridine synthase TruB family. Type 1 subfamily.

It carries out the reaction uridine(55) in tRNA = pseudouridine(55) in tRNA. Its function is as follows. Responsible for synthesis of pseudouridine from uracil-55 in the psi GC loop of transfer RNAs. In Campylobacter jejuni subsp. jejuni serotype O:23/36 (strain 81-176), this protein is tRNA pseudouridine synthase B.